The following is a 264-amino-acid chain: Acyl-[acyl-carrier-protein]--UDP-N-acetylglucosamine O-acyltransferase (264 aa).

Belongs to the transferase hexapeptide repeat family. LpxA subfamily. Homotrimer.

It localises to the cytoplasm. The catalysed reaction is a (3R)-hydroxyacyl-[ACP] + UDP-N-acetyl-alpha-D-glucosamine = a UDP-3-O-[(3R)-3-hydroxyacyl]-N-acetyl-alpha-D-glucosamine + holo-[ACP]. Its pathway is glycolipid biosynthesis; lipid IV(A) biosynthesis; lipid IV(A) from (3R)-3-hydroxytetradecanoyl-[acyl-carrier-protein] and UDP-N-acetyl-alpha-D-glucosamine: step 1/6. Its function is as follows. Involved in the biosynthesis of lipid A, a phosphorylated glycolipid that anchors the lipopolysaccharide to the outer membrane of the cell. This chain is Acyl-[acyl-carrier-protein]--UDP-N-acetylglucosamine O-acyltransferase, found in Actinobacillus pleuropneumoniae serotype 7 (strain AP76).